Here is a 1294-residue protein sequence, read N- to C-terminus: Unconventional myosin-VI (1294 aa).

The Myosin N-terminal SH3-like domain maps to 2–53; it reads EDGKPVWAPHPTDGFQMGNIVDIGPDSLTIEPLNQKGKTFLALINQVFPAEE. Positions 57 to 771 constitute a Myosin motor domain; the sequence is KDVEDNCSLM…KFAEFDQIMK (715 aa). An ATP-binding site is contributed by 151–158; sequence GESGAGKT. Phosphoserine is present on Ser267. The tract at residues 273–317 is responsible for slow ATPase activity; the sequence is YLNRGCTRYFANKETDKQILQNRKSPEYLKAGSMKDPLLDDHGDF. Thr405 is subject to Phosphothreonine. Residue Ser604 is modified to Phosphoserine. The segment at 665-672 is actin-binding; sequence FIRCIKPN. The segment at 782 to 810 is required for binding calmodulin; it reads KRVNHWLTCSRWKKVQWCSLSVIKLKNKI. Positions 814–834 constitute an IQ domain; that stretch reads AEACIKMQKTIRMWLCKRRHK. The three-helix bundle stretch occupies residues 835–916; sequence PRIDGLVKVG…EELLSALQKK (82 aa). Positions 917-984 are SAH; that stretch reads KQQEEEAERL…EDDEKRIQAE (68 aa). Positions 934–955 are disordered; it reads EKERKRREEDEKRRRKEEEERR. The residue at position 1025 (Ser1025) is a Phosphoserine. The interval 1060–1285 is interaction with TAX1BP1 and CALCOCO2/NDP52; that stretch reads KEMSEFLSRG…ESRQARPTYA (226 aa). Positions 1116-1118 are interaction with OPTN; the sequence is RRL. Position 1155 is a phosphoserine (Ser1155). An interaction with TOM1 region spans residues 1157–1285; the sequence is QQNPAAQIPA…ESRQARPTYA (129 aa).

Belongs to the TRAFAC class myosin-kinesin ATPase superfamily. Myosin family. Homodimer; dimerization seems to implicate the unfolding of the three-helix bundle region creating an additional calmodulin binding site, and cargo binding. Able to function as a monomer under specific conditions in vitro. Forms a complex with CFTR and DAB2 in the apical membrane of epithelial cells. Component of the DISP/DOCK7-induced septin displacement complex, at least composed of DOCK7, LRCH3 and MYO6. Binding to calmodulin through a unique insert, not found in other myosins, located in the neck region between the motor domain and the IQ domain appears to contribute to the directionality reversal. This interaction occurs only if the C-terminal lobe of calmodulin is occupied by calcium. Interaction with F-actin/ACTN1 occurs only at the apical brush border domain of the proximal tubule cells. Interacts with DAB2. In vitro, the C-terminal globular tail binds a C-terminal region of DAB2. Interacts with CFTR. Interacts with CABP5. Interacts with TOM1. Interacts with OPTN. Interacts with TAX1BP1 and CALCOCO2/NDP52. Interacts with TOM1L2. Interacts with CLIC5; may work together in a complex which also includes RDX and MYO6 to stabilize linkages between the plasma membrane and subjacent actin cytoskeleton at the base of stereocilia. Post-translationally, phosphorylation in the motor domain, induced by EGF, results in translocation of MYO6 from the cell surface to membrane ruffles and affects F-actin dynamics. Phosphorylated in vitro by p21-activated kinase (PAK). In terms of tissue distribution, expressed in most tissues examined including heart, brain, placenta, pancreas, spleen, thymus, prostate, testis, ovary, small intestine and colon. Highest levels in brain, pancreas, testis and small intestine. Also expressed in fetal brain and cochlea. Isoform 1 and isoform 2, containing the small insert, and isoform 4, containing neither insert, are expressed in unpolarized epithelial cells.

It localises to the golgi apparatus. Its subcellular location is the trans-Golgi network membrane. The protein localises to the nucleus. The protein resides in the cytoplasm. It is found in the perinuclear region. It localises to the membrane. Its subcellular location is the clathrin-coated pit. The protein localises to the cytoplasmic vesicle. The protein resides in the clathrin-coated vesicle. It is found in the cell projection. It localises to the filopodium. Its subcellular location is the ruffle membrane. The protein localises to the microvillus. The protein resides in the cytosol. It is found in the autophagosome. It localises to the endosome. Its subcellular location is the clathrin-coated vesicle membrane. In terms of biological role, myosins are actin-based motor molecules with ATPase activity. Unconventional myosins serve in intracellular movements. Myosin 6 is a reverse-direction motor protein that moves towards the minus-end of actin filaments. Has slow rate of actin-activated ADP release due to weak ATP binding. Functions in a variety of intracellular processes such as vesicular membrane trafficking and cell migration. Required for the structural integrity of the Golgi apparatus via the p53-dependent pro-survival pathway. Appears to be involved in a very early step of clathrin-mediated endocytosis in polarized epithelial cells. Together with TOM1, mediates delivery of endocytic cargo to autophagosomes thereby promoting autophagosome maturation and driving fusion with lysosomes. Links TOM1 with autophagy receptors, such as TAX1BP1; CALCOCO2/NDP52 and OPTN. May act as a regulator of F-actin dynamics. As part of the DISP complex, may regulate the association of septins with actin and thereby regulate the actin cytoskeleton. May play a role in transporting DAB2 from the plasma membrane to specific cellular targets. May play a role in the extension and network organization of neurites. Required for structural integrity of inner ear hair cells. Required for the correct localization of CLIC5 and RDX at the stereocilium base. Modulates RNA polymerase II-dependent transcription. In Homo sapiens (Human), this protein is Unconventional myosin-VI.